Reading from the N-terminus, the 397-residue chain is Cytochrome b (397 aa).

4 helical membrane-spanning segments follow: residues F38 to M58, W82 to F104, V119 to V139, and F185 to A205. Heme b contacts are provided by H88 and H102. Residues H189 and H203 each contribute to the heme b site. Position 208 (H208) interacts with a ubiquinone. The next 4 helical transmembrane spans lie at F231–F251, A295–K315, I327–C347, and F354–P373.

This sequence belongs to the cytochrome b family. As to quaternary structure, the main subunits of complex b-c1 are: cytochrome b, cytochrome c1 and the Rieske protein. The cofactor is heme b.

Its subcellular location is the mitochondrion inner membrane. Component of the ubiquinol-cytochrome c reductase complex (complex III or cytochrome b-c1 complex) that is part of the mitochondrial respiratory chain. The b-c1 complex mediates electron transfer from ubiquinol to cytochrome c. Contributes to the generation of a proton gradient across the mitochondrial membrane that is then used for ATP synthesis. This chain is Cytochrome b (MT-CYB), found in Oryza sativa subsp. indica (Rice).